We begin with the raw amino-acid sequence, 900 residues long: Translation initiation factor IF-2 (900 aa).

The disordered stretch occupies residues 48-310; it reads HLNRDRGNAP…KPSSLQQSFN (263 aa). Residues 68–82 show a composition bias toward polar residues; that stretch reads STLNVPSTGGKSKSV. Composition is skewed to basic and acidic residues over residues 85-98 and 108-164; these read EVRK…RDPI and QARR…KEKV. The segment covering 165–176 has biased composition (polar residues); the sequence is TNQQNENMTKPA. The span at 177–237 shows a compositional bias: basic and acidic residues; sequence QSEKAKREAE…SATKPEESAD (61 aa). A compositionally biased stretch (basic residues) spans 263 to 277; the sequence is TRTRAAKVTKQKKGN. Residues 278–291 are compositionally biased toward basic and acidic residues; sequence RQSESKADREEARA. Residues 399–568 form the tr-type G domain; that stretch reads FRAPVVTIMG…LLQAEVLELK (170 aa). Residues 408 to 415 form a G1 region; that stretch reads GHVDHGKT. Residue 408-415 participates in GTP binding; that stretch reads GHVDHGKT. The tract at residues 433 to 437 is G2; the sequence is GITQH. Positions 454–457 are G3; the sequence is DTPG. GTP contacts are provided by residues 454–458 and 508–511; these read DTPGH and NKID. A G4 region spans residues 508 to 511; it reads NKID. Residues 544–546 are G5; it reads SAK.

The protein belongs to the TRAFAC class translation factor GTPase superfamily. Classic translation factor GTPase family. IF-2 subfamily.

The protein localises to the cytoplasm. Functionally, one of the essential components for the initiation of protein synthesis. Protects formylmethionyl-tRNA from spontaneous hydrolysis and promotes its binding to the 30S ribosomal subunits. Also involved in the hydrolysis of GTP during the formation of the 70S ribosomal complex. The sequence is that of Translation initiation factor IF-2 from Pectobacterium atrosepticum (strain SCRI 1043 / ATCC BAA-672) (Erwinia carotovora subsp. atroseptica).